Here is a 352-residue protein sequence, read N- to C-terminus: 3-isopropylmalate dehydrogenase (352 aa).

Substrate-binding residues include arginine 96, arginine 106, arginine 134, and aspartate 220. The Mg(2+) site is built by aspartate 220, aspartate 244, and aspartate 248. Position 277–289 (277–289 (GSAPDIAGKNLAN)) interacts with NAD(+).

This sequence belongs to the isocitrate and isopropylmalate dehydrogenases family. LeuB type 1 subfamily. As to quaternary structure, homodimer. Mg(2+) serves as cofactor. It depends on Mn(2+) as a cofactor.

Its subcellular location is the cytoplasm. It catalyses the reaction (2R,3S)-3-isopropylmalate + NAD(+) = 4-methyl-2-oxopentanoate + CO2 + NADH. Its pathway is amino-acid biosynthesis; L-leucine biosynthesis; L-leucine from 3-methyl-2-oxobutanoate: step 3/4. Its function is as follows. Catalyzes the oxidation of 3-carboxy-2-hydroxy-4-methylpentanoate (3-isopropylmalate) to 3-carboxy-4-methyl-2-oxopentanoate. The product decarboxylates to 4-methyl-2 oxopentanoate. This chain is 3-isopropylmalate dehydrogenase, found in Desulfitobacterium hafniense (strain Y51).